A 226-amino-acid chain; its full sequence is Lipoprotein-releasing system ATP-binding protein LolD (226 aa).

The ABC transporter domain maps to 6–226 (LSVEQVSKSF…QLQQGSLIRI (221 aa)). 42 to 49 (GESGCGKS) serves as a coordination point for ATP.

Belongs to the ABC transporter superfamily. Lipoprotein translocase (TC 3.A.1.125) family. As to quaternary structure, the complex is composed of two ATP-binding proteins (LolD) and two transmembrane proteins (LolC and LolE).

The protein resides in the cell inner membrane. Functionally, part of the ABC transporter complex LolCDE involved in the translocation of mature outer membrane-directed lipoproteins, from the inner membrane to the periplasmic chaperone, LolA. Responsible for the formation of the LolA-lipoprotein complex in an ATP-dependent manner. The protein is Lipoprotein-releasing system ATP-binding protein LolD of Treponema pallidum (strain Nichols).